We begin with the raw amino-acid sequence, 230 residues long: Small ribosomal subunit protein uS3 (230 aa).

Positions 39 to 107 constitute a KH type-2 domain; the sequence is VRKFLVEKLQ…PAQINIAEIR (69 aa).

This sequence belongs to the universal ribosomal protein uS3 family. As to quaternary structure, part of the 30S ribosomal subunit. Forms a tight complex with proteins S10 and S14.

Its function is as follows. Binds the lower part of the 30S subunit head. Binds mRNA in the 70S ribosome, positioning it for translation. This Shewanella putrefaciens (strain CN-32 / ATCC BAA-453) protein is Small ribosomal subunit protein uS3.